Here is a 398-residue protein sequence, read N- to C-terminus: Flavohemoprotein (398 aa).

Residues 9–147 (QLTPAQIKII…LAKLLIDLEA (139 aa)) enclose the Globin domain. A heme b-binding site is contributed by His93. Residues Tyr103 and Glu146 each act as charge relay system in the active site. The tract at residues 155-398 (WRWFKDFKVT…KLEYFGPYDP (244 aa)) is reductase. The FAD-binding FR-type domain occupies 156–263 (RWFKDFKVTR…APPAGNFVYD (108 aa)). FAD is bound by residues Tyr196 and 212–215 (REYS). 276-281 (GIGITP) contacts NADP(+). Residue 395–398 (PYDP) coordinates FAD.

The protein belongs to the globin family. The cofactor is FAD. Requires heme b as cofactor.

Its subcellular location is the cytoplasm. The enzyme catalyses 2 nitric oxide + NADPH + 2 O2 = 2 nitrate + NADP(+) + H(+). It catalyses the reaction 2 nitric oxide + NADH + 2 O2 = 2 nitrate + NAD(+) + H(+). Inhibited by imidazoles. Functionally, nitric oxide dioxygenase involved in NO detoxification in an aerobic process, termed nitric oxide dioxygenase (NOD) reaction that utilizes O(2) and NAD(P)H to convert NO to nitrate, which protects the fungus from various noxious nitrogen compounds. Therefore, plays a central role in the inducible response to nitrosative stress. Plays a role in virulence since nitric oxide is generated by macrophages of the host immune system. The chain is Flavohemoprotein (YHB1) from Candida albicans (strain SC5314 / ATCC MYA-2876) (Yeast).